A 267-amino-acid chain; its full sequence is Diphthine--ammonia ligase (267 aa).

Phosphotyrosine is present on Tyr97.

Belongs to the Diphthine--ammonia ligase family.

It catalyses the reaction diphthine-[translation elongation factor 2] + NH4(+) + ATP = diphthamide-[translation elongation factor 2] + AMP + diphosphate + H(+). Its pathway is protein modification; peptidyl-diphthamide biosynthesis. In terms of biological role, amidase that catalyzes the last step of diphthamide biosynthesis using ammonium and ATP. Diphthamide biosynthesis consists in the conversion of an L-histidine residue in the translation elongation factor eEF-2 (EEF2) to diphthamide. The chain is Diphthine--ammonia ligase (DPH6) from Bos taurus (Bovine).